The primary structure comprises 94 residues: Large ribosomal subunit protein eL33 (94 aa).

The protein belongs to the eukaryotic ribosomal protein eL33 family.

The sequence is that of Large ribosomal subunit protein eL33 from Aeropyrum pernix (strain ATCC 700893 / DSM 11879 / JCM 9820 / NBRC 100138 / K1).